The following is a 111-amino-acid chain: BET1-like protein (111 aa).

The Cytoplasmic segment spans residues 1–86 (MADWTRAQSS…VARSGRDTRK (86 aa)). Phosphoserine occurs at positions 9 and 37. In terms of domain architecture, t-SNARE coiled-coil homology spans 15–77 (EIVDRENKRM…TGSVKRFSTV (63 aa)). A helical; Anchor for type IV membrane protein membrane pass occupies residues 87–107 (LLCGMAVVLIVAFFILSYLFS). Over 108–111 (RTRT) the chain is Vesicular.

Component of a SNARE complex consisting of STX5, YKT6, GOSR1 and BET1L. Interacts with STX5. Widely expressed. Highest levels in heart, liver, skeletal muscle and kidney.

The protein resides in the golgi apparatus membrane. The protein localises to the golgi apparatus. Its subcellular location is the trans-Golgi network membrane. Vesicle SNARE required for targeting and fusion of retrograde transport vesicles with the Golgi complex. Required for the integrity of the Golgi complex. The protein is BET1-like protein of Rattus norvegicus (Rat).